The primary structure comprises 505 residues: Kinesin light chain 3 (505 aa).

Positions 1 to 20 (MSVQVAAPGGLGLGLERPSP) are disordered. Positions 88–150 (LLALSAHVGA…EEEKSHLEFL (63 aa)) form a coiled coil. The tract at residues 157-193 (DPPAESQQPESPPRRDSLASLFPSEEEERRGPEAVGA) is disordered. The residue at position 173 (Ser173) is a Phosphoserine. TPR repeat units lie at residues 207 to 240 (LRTLHNLVIQYAGQGRYEVAVPLCRQALEDLERS), 249 to 282 (ATMLNILALVYRDQNKYKEATDLLHDALQIREQT), 291 to 324 (AATLNNLAVLYGKRGRYREAEPLCQRALEIREKV), 333 to 366 (AKQLNNLALLCQNQGKFEEVERHYARALSIYEAL), and 375 to 408 (AKTKNNLASAYLKQNKYQQAEELYKEILHREALP). Residues 409-505 (APLGAPNTGT…STSTQDLGPR (97 aa)) are disordered. Over residues 416–434 (TGTTSDTQQQTLSRSSSFS) the composition is skewed to low complexity. The segment covering 435–453 (KLRESIRRGSEKLVSRLRG) has biased composition (basic and acidic residues). Residue Ser467 is modified to Phosphoserine. Over residues 489 to 505 (SEASRTLSTSTQDLGPR) the composition is skewed to polar residues. Thr499 is subject to Phosphothreonine.

It belongs to the kinesin light chain family. Oligomer composed of two heavy chains and two light chains. Associates with microtubulin in an ATP-dependent manner. Interacts with KIF5C. Interacts with ODF1. Interacts with LRGUK. Interacts with VDAC2.

Its subcellular location is the cytoplasm. It is found in the cytoskeleton. The protein resides in the mitochondrion. Kinesin is a microtubule-associated force-producing protein that may play a role in organelle transport. Plays a role during spermiogenesis in the development of the sperm tail midpiece and in the normal function of spermatozoa. May play a role in the formation of the mitochondrial sheath formation in the developing spermatid midpiece. The protein is Kinesin light chain 3 (KLC3) of Bos taurus (Bovine).